Consider the following 550-residue polypeptide: Formate--tetrahydrofolate ligase (550 aa).

62 to 69 contributes to the ATP binding site; that stretch reads TPAGEGKS.

This sequence belongs to the formate--tetrahydrofolate ligase family.

The enzyme catalyses (6S)-5,6,7,8-tetrahydrofolate + formate + ATP = (6R)-10-formyltetrahydrofolate + ADP + phosphate. The protein operates within one-carbon metabolism; tetrahydrofolate interconversion. This Corynebacterium diphtheriae (strain ATCC 700971 / NCTC 13129 / Biotype gravis) protein is Formate--tetrahydrofolate ligase.